Consider the following 369-residue polypeptide: Endophilin-A (369 aa).

Residues 18–248 (TEKMGGAEGT…LQEKRSEAES (231 aa)) enclose the BAR domain. Residues 227–247 (QCADVLRGLQETLQEKRSEAE) are a coiled coil. The tract at residues 266–295 (GGGGGLNEDGTPSHISSSASPLPSPMRSPA) is disordered. Residues 277–294 (PSHISSSASPLPSPMRSP) are compositionally biased toward low complexity. The SH3 domain occupies 305–364 (QQQPCCQALYDFEPENPGELAFKENDIITLLNRVDDNWFEGAVNGRTGYFPQSYVQVQVP).

The protein belongs to the endophilin family.

The protein resides in the cytoplasm. Its subcellular location is the membrane. Its function is as follows. Required presynaptically at the neuromuscular junction. Implicated in synaptic vesicle endocytosis. This Drosophila erecta (Fruit fly) protein is Endophilin-A.